The chain runs to 365 residues: MSGNTFGNLFAVTNFGESHGPAIGCVIDGCPPGMALSEADIQGDLDRRRPGTSRHVTQRNEPDAVEILSGVYEGKTTGTPICLLIKNTDQRSKDYGNILDTFRPGHADYTYLHKYGLRDPRGGGRSSARLTAPMVAAGAVAKKWLFEKYGTTFRGCMAQIGEAMIPFESWEHVANNPFFAPVADVSNLENYMDALRKAGDSCGARIRVVASGVPVGLGEPLFDKLDADIAFAMMGINAVKGVEIGAGFASVTQRGTTHGDSLSPEGFMSNNAGGVLGGISTGQDLEVSIAIKPTSSIITPRQSIDTAGNPAEVVTKGRHDPCVGIRATPIAEAMLALVVMEHALRQRAQCGDVKVSTPDIMRSRG.

Arg-48 and Arg-54 together coordinate NADP(+). Residues 125–127 (RSS), 237–238 (NA), Gly-277, 292–296 (KPTSS), and Arg-318 contribute to the FMN site.

It belongs to the chorismate synthase family. In terms of assembly, homotetramer. FMNH2 is required as a cofactor.

The catalysed reaction is 5-O-(1-carboxyvinyl)-3-phosphoshikimate = chorismate + phosphate. It participates in metabolic intermediate biosynthesis; chorismate biosynthesis; chorismate from D-erythrose 4-phosphate and phosphoenolpyruvate: step 7/7. Catalyzes the anti-1,4-elimination of the C-3 phosphate and the C-6 proR hydrogen from 5-enolpyruvylshikimate-3-phosphate (EPSP) to yield chorismate, which is the branch point compound that serves as the starting substrate for the three terminal pathways of aromatic amino acid biosynthesis. This reaction introduces a second double bond into the aromatic ring system. This chain is Chorismate synthase, found in Polaromonas naphthalenivorans (strain CJ2).